The following is a 714-amino-acid chain: Calpain-1 catalytic subunit (714 aa).

One can recognise a Calpain catalytic domain in the interval 55–354; it reads LFRDEAFPPV…FTRLEICNLT (300 aa). The Ca(2+) site is built by glutamine 109 and aspartate 114. Active-site residues include cysteine 115, histidine 272, and asparagine 296. 2 residues coordinate Ca(2+): aspartate 318 and aspartate 323. Threonine 354 is modified (phosphothreonine). Positions 355–526 are domain III; that stretch reads PDALKSQRVR…KKAGTQELDD (172 aa). Positions 527–542 are linker; that stretch reads QVQAILPDEQVLSEEE. A domain IV region spans residues 543 to 713; the sequence is IDENFKALFR…LFKWLQLTMF (171 aa). EF-hand domains follow at residues 585–618, 615–650, and 680–714; these read FSLESCRSMVNLMDRDGNGKLGLVEFNILWNRIR, NRIRNYLSIFRKFDLDKSGSMSAYEMRMAIESAGFK, and VRLETMFRFFKTLDTDLDGVVTFDLFKWLQLTMFA. Ca(2+) is bound by residues aspartate 598, aspartate 600, asparagine 602, lysine 604, glutamate 609, aspartate 628, aspartate 630, serine 632, serine 634, and glutamate 639.

This sequence belongs to the peptidase C2 family. In terms of assembly, forms a heterodimer with a small (regulatory) subunit CAPNS1. Ca(2+) serves as cofactor. In terms of processing, undergoes calcium-induced successive autoproteolytic cleavages that generate a membrane-bound 78 kDa active form and an intracellular 75 kDa active form. Calpastatin reduces with high efficiency the transition from 78 kDa to 75 kDa calpain forms.

The protein resides in the cytoplasm. It is found in the cell membrane. It carries out the reaction Broad endopeptidase specificity.. Activated by micromolar concentrations of calcium and inhibited by calpastatin. Functionally, calcium-regulated non-lysosomal thiol-protease which catalyzes limited proteolysis of substrates involved in cytoskeletal remodeling and signal transduction. Proteolytically cleaves CTBP1. Cleaves and activates caspase-7 (CASP7). The protein is Calpain-1 catalytic subunit of Sus scrofa (Pig).